Reading from the N-terminus, the 274-residue chain is Eukaryotic translation initiation factor 3 subunit J (274 aa).

2 disordered regions span residues 1–120 and 227–246; these read MSGK…DLKH and EEKA…TKTS. Residues 30-50 show a composition bias toward acidic residues; it reads DEEGNESDVLDSWDAAEDSEV. Residues 46 to 112 are a coiled coil; sequence EDSEVEREKA…AERRERLRRE (67 aa). 2 stretches are compositionally biased toward basic and acidic residues: residues 51-67 and 79-92; these read EREK…KAEA and RIAE…RQLA. Residues 93-102 are compositionally biased toward acidic residues; that stretch reads EDSDAEEETE. Positions 103-120 are enriched in basic and acidic residues; the sequence is AERRERLRREQKESDLKH.

It belongs to the eIF-3 subunit J family. Component of the eukaryotic translation initiation factor 3 (eIF-3) complex.

The protein resides in the cytoplasm. Component of the eukaryotic translation initiation factor 3 (eIF-3) complex, which is involved in protein synthesis of a specialized repertoire of mRNAs and, together with other initiation factors, stimulates binding of mRNA and methionyl-tRNAi to the 40S ribosome. The eIF-3 complex specifically targets and initiates translation of a subset of mRNAs involved in cell proliferation. The protein is Eukaryotic translation initiation factor 3 subunit J (hcr-1) of Neurospora crassa (strain ATCC 24698 / 74-OR23-1A / CBS 708.71 / DSM 1257 / FGSC 987).